A 284-amino-acid chain; its full sequence is 2-dehydro-3-deoxyphosphooctonate aldolase (284 aa).

The protein belongs to the KdsA family.

It localises to the cytoplasm. It catalyses the reaction D-arabinose 5-phosphate + phosphoenolpyruvate + H2O = 3-deoxy-alpha-D-manno-2-octulosonate-8-phosphate + phosphate. Its pathway is carbohydrate biosynthesis; 3-deoxy-D-manno-octulosonate biosynthesis; 3-deoxy-D-manno-octulosonate from D-ribulose 5-phosphate: step 2/3. It participates in bacterial outer membrane biogenesis; lipopolysaccharide biosynthesis. The chain is 2-dehydro-3-deoxyphosphooctonate aldolase from Ralstonia pickettii (strain 12J).